The chain runs to 389 residues: Acetyl-CoA:oxalate CoA-transferase (389 aa).

Residue H237 is part of the active site.

As to quaternary structure, homodimer.

It catalyses the reaction oxalate + acetyl-CoA = oxalyl-CoA + acetate. In terms of biological role, involved in the catabolism of oxalate and in the adapatation to low pH. ACOCT serves to prime the oxalate-induced acid tolerance response (ATR) cycle by producing substrate for oxalyl-CoA decarboxylase (OXC) and formyl-coenzyme A transferase (FCOCT). Catalyzes the reversible conversion of acetyl-CoA and oxalate to oxalyl-CoA and acetate. It can also use formyl-CoA and oxalate to produce oxalyl-CoA and formate with significantly reduced specific activity. This Acetobacter aceti protein is Acetyl-CoA:oxalate CoA-transferase (uctC).